The sequence spans 65 residues: MKASELREKNNEELKKELLELLREQFGLRMQRGAGQLARPDRFSKIRKDIARIKTVMNERSVAGE.

It belongs to the universal ribosomal protein uL29 family.

This chain is Large ribosomal subunit protein uL29, found in Thioalkalivibrio sulfidiphilus (strain HL-EbGR7).